An 88-amino-acid polypeptide reads, in one-letter code: Putative sulfur carrier protein AF_0552 (88 aa).

The protein belongs to the sulfur carrier protein CysO family.

This is Putative sulfur carrier protein AF_0552 from Archaeoglobus fulgidus (strain ATCC 49558 / DSM 4304 / JCM 9628 / NBRC 100126 / VC-16).